Consider the following 341-residue polypeptide: 4-(gamma-L-glutamylamino)butanoyl-[BtrI acyl-carrier protein] monooxygenase BtrO (341 aa).

The protein belongs to the bacterial luciferase oxidoreductase family.

The enzyme catalyses 4-(gamma-L-glutamylamino)butanoyl-[BtrI ACP] + FMNH2 + O2 = 4-(gamma-L-glutamylamino)-(2S)-2-hydroxybutanoyl-[BtrI ACP] + FMN + H2O + H(+). It participates in antibiotic biosynthesis; butirosin biosynthesis. Functionally, monooxygenase component of a two-component system involved in the biosynthesis of the side chain of the aminoglycoside antibiotics in the biosynthetic pathway of butirosin. Together with BtrV, mediates hydroxylation of gamma-L-Glu-GABA-S-BtrI. Not able to hydroxylate free substrates, activation by the acyl-carrier protein is mandatory. Octanoyl-S-[BtrI acyl-carrier protein] is also accepted as substrate. This Niallia circulans (Bacillus circulans) protein is 4-(gamma-L-glutamylamino)butanoyl-[BtrI acyl-carrier protein] monooxygenase BtrO (btrO).